The chain runs to 274 residues: Lectizyme (274 aa).

A signal peptide spans 1–16 (MKFFAVFALCVASVSA). A Peptidase S1 domain is found at 32 to 268 (IINGHEAEKG…FDKWIEDSIE (237 aa)). Cysteine 57 and cysteine 73 are joined by a disulfide. Active-site charge relay system residues include histidine 72 and aspartate 119. 2 disulfide bridges follow: cysteine 188/cysteine 204 and cysteine 215/cysteine 244. The Charge relay system role is filled by serine 219.

This sequence belongs to the peptidase S1 family. Expressed in the midgut.

Its subcellular location is the secreted. In terms of biological role, protein with lectin and protease activity involved in the establishment of trypanosome infections in tsetse flies. Binds D-glucosamine and agglutinates bloodstream-form trypanosomes and rabbit red blood cells. Capable of inducing transformation of bloodstream-form trypanosomes into procyclic (midgut) forms in vitro. This chain is Lectizyme (Gpl), found in Glossina austeni (Savannah tsetse fly).